The sequence spans 330 residues: Cytoskeleton protein RodZ (330 aa).

Topologically, residues 1-111 (MNTEATQDHQ…LGKRRKKRDG (111 aa)) are cytoplasmic. One can recognise an HTH cro/C1-type domain in the interval 19–71 (LRHAREQLGLSQQAVAERLCLKVSTVRDIEDDKAPADLASTFLRGYIRSYARL). The segment at residues 30 to 49 (QQAVAERLCLKVSTVRDIED) is a DNA-binding region (H-T-H motif). Residues 112–132 (WLMSFTWLVLFVVIGLSGAWW) traverse the membrane as a helical; Signal-anchor for type II membrane protein segment. The Periplasmic segment spans residues 133–330 (WQDHKAQQEE…TLNAEQSPAQ (198 aa)). Polar residues predominate over residues 146-166 (MADQSSAELNGGDANSQNVPL). Residues 146–237 (MADQSSAELN…ASPLPTDQAN (92 aa)) are disordered. 2 stretches are compositionally biased toward low complexity: residues 176 to 202 (TDSAANSAPTDTASTPTTSAPAQTPAD) and 216 to 233 (TAGTAPTTPATPASPLPT).

It belongs to the RodZ family.

The protein resides in the cell inner membrane. Its function is as follows. Cytoskeletal protein that is involved in cell-shape control through regulation of the length of the long axis. The sequence is that of Cytoskeleton protein RodZ from Klebsiella pneumoniae (strain 342).